Consider the following 59-residue polypeptide: Large ribosomal subunit protein bL32 (59 aa).

The protein belongs to the bacterial ribosomal protein bL32 family.

This is Large ribosomal subunit protein bL32 from Malacoplasma penetrans (strain HF-2) (Mycoplasma penetrans).